The following is a 500-amino-acid chain: 4-aminobutyrate aminotransferase, mitochondrial (500 aa).

The transit peptide at 1-28 directs the protein to the mitochondrion; it reads MASVLLTRRLACSFRHNHRLLVPGWRHI. A [2Fe-2S] cluster-binding site is contributed by C163. A pyridoxal 5'-phosphate-binding site is contributed by 164–165; sequence GS. C166 serves as a coordination point for [2Fe-2S] cluster. R220 lines the substrate pocket. Residue K231 is modified to N6-succinyllysine. K252 carries the post-translational modification N6-acetyllysine; alternate. K252 is modified (N6-succinyllysine; alternate). 2 positions are modified to N6-acetyllysine: K279 and K318. K357 is modified (N6-(pyridoxal phosphate)lysine). T381 provides a ligand contact to pyridoxal 5'-phosphate. Position 413 is an N6-acetyllysine; alternate (K413). K413 bears the N6-succinyllysine; alternate mark. 2 positions are modified to N6-acetyllysine: K452 and K470.

Belongs to the class-III pyridoxal-phosphate-dependent aminotransferase family. In terms of assembly, homodimer; disulfide-linked. The cofactor is pyridoxal 5'-phosphate. It depends on [2Fe-2S] cluster as a cofactor.

Its subcellular location is the mitochondrion matrix. The enzyme catalyses 4-aminobutanoate + 2-oxoglutarate = succinate semialdehyde + L-glutamate. It catalyses the reaction (S)-3-amino-2-methylpropanoate + 2-oxoglutarate = 2-methyl-3-oxopropanoate + L-glutamate. Functionally, catalyzes the conversion of gamma-aminobutyrate and L-beta-aminoisobutyrate to succinate semialdehyde and methylmalonate semialdehyde, respectively. Can also convert delta-aminovalerate and beta-alanine. This chain is 4-aminobutyrate aminotransferase, mitochondrial (ABAT), found in Sus scrofa (Pig).